A 360-amino-acid polypeptide reads, in one-letter code: MKPSIVAKLEALQERHEEVQALLGEPSVIADMDRFRALSREYAQLTDITRCFQQWQQAQEDQQTAEMMLDDPEMRDMAQEELKEGKATIEALEQQLQVLLLPKDPDDERGCFLEVRAGTGGDEAAIFAGDLFRMYSRYAESRRWRVEVMSASDGEHGGYKEVIAKISGDGVYGQLKFESGGHRVQRVPATESQGRIHTSACTVAVMAEVPEAELPDINPADLRIDTFRSSGAGGQHVNTTDSAIRITHLPTGIVVECQDERSQHKNKAKALSVLGARIRAAEVQKRQQEEASTRRNLLGSGDRSDRIRTYNFPQGRVTDHRINLTLYRLDEVMEGKLDTLIQPVVQEYQADQLAALSEQE.

Glutamine 235 is modified (N5-methylglutamine). The segment covering 284 to 293 (QKRQQEEAST) has biased composition (basic and acidic residues). The tract at residues 284–305 (QKRQQEEASTRRNLLGSGDRSD) is disordered.

It belongs to the prokaryotic/mitochondrial release factor family. In terms of processing, methylated by PrmC. Methylation increases the termination efficiency of RF1.

The protein resides in the cytoplasm. Peptide chain release factor 1 directs the termination of translation in response to the peptide chain termination codons UAG and UAA. The sequence is that of Peptide chain release factor 1 from Pectobacterium carotovorum subsp. carotovorum (strain PC1).